The following is a 73-amino-acid chain: Myosin-IB light chain (73 aa).

EF-hand domains follow at residues 3 to 38 and 38 to 73; these read DEKT…GLPM and MTEA…VDES. Residues D16, D18, D20, and E27 each coordinate Ca(2+).

Myosin I is a dimer of a heavy and a light chain. Inability to self-assemble into filaments. Interacts with myoB. Does not interact with myoC or myoD.

Its function is as follows. Functions as the light chain for myosin-B. Binds calcium with submicromolar affinity and may sense physiological calcium changes. The sequence is that of Myosin-IB light chain (mlcB) from Dictyostelium discoideum (Social amoeba).